The primary structure comprises 23 residues: QYVKDPDKQVVARIFLDLQLVQR.

It is found in the secreted. The protein resides in the cell wall. In Nicotiana tabacum (Common tobacco), this protein is 48 kDa cell wall protein.